We begin with the raw amino-acid sequence, 708 residues long: Exocyst complex component 5 (708 aa).

The residue at position 2 (A2) is an N-acetylalanine. Positions 40–101 form a coiled coil; the sequence is KRLLEEFVNH…AFQHFQELDE (62 aa). Residues T122, T395, and T405 each carry the phosphothreonine modification. Phosphoserine is present on S412.

Belongs to the SEC10 family. In terms of assembly, the exocyst complex is composed of EXOC1, EXOC2, EXOC3, EXOC4, EXOC5, EXOC6, EXOC7 and EXOC8. Interacts with EXOC3L1.

The protein resides in the cytoplasm. The protein localises to the midbody. In terms of biological role, component of the exocyst complex involved in the docking of exocytic vesicles with fusion sites on the plasma membrane. The sequence is that of Exocyst complex component 5 (Exoc5) from Mus musculus (Mouse).